The sequence spans 639 residues: Chaperone protein HtpG (639 aa).

The segment at 1 to 347 (MSQQETHGFQ…SNDLPLNVSR (347 aa)) is a; substrate-binding. Residues 348 to 564 (EILQDNKVTT…EGEMSTQMIK (217 aa)) are b. Positions 565-639 (LMQAAGQDVP…MNQMLLASVK (75 aa)) are c.

The protein belongs to the heat shock protein 90 family. In terms of assembly, homodimer.

The protein resides in the cytoplasm. Its function is as follows. Molecular chaperone. Has ATPase activity. This chain is Chaperone protein HtpG, found in Shewanella halifaxensis (strain HAW-EB4).